The primary structure comprises 363 residues: Serpentine receptor class beta-18 (363 aa).

Transmembrane regions (helical) follow at residues 52–72, 92–112, 135–155, 172–192, 218–238, 276–296, and 303–323; these read LAQF…VVYI, MLLF…YHII, FRYT…CIYI, LILA…IIWV, KATI…IGLF, AALM…YNFL, and TIAT…LVIV.

It belongs to the nematode receptor-like protein srb family.

The protein resides in the membrane. The chain is Serpentine receptor class beta-18 (srb-18) from Caenorhabditis elegans.